We begin with the raw amino-acid sequence, 57 residues long: Small nuclear protein PRAC1 (57 aa).

Residues 38–57 (RSDGSACNSGISGGRGRKIP) form a disordered region.

Highly expressed in prostate, rectum, and distal colon, and weakly expressed in bladder. Expressed in prostate cancer cell lines.

It localises to the nucleus. The polypeptide is Small nuclear protein PRAC1 (PRAC1) (Homo sapiens (Human)).